Reading from the N-terminus, the 66-residue chain is Large ribosomal subunit protein bL33c (66 aa).

Belongs to the bacterial ribosomal protein bL33 family.

The protein localises to the plastid. Its subcellular location is the chloroplast. The chain is Large ribosomal subunit protein bL33c from Manihot esculenta (Cassava).